A 226-amino-acid chain; its full sequence is Uracil-DNA glycosylase (226 aa).

The active-site Proton acceptor is the Asp-64.

The protein belongs to the uracil-DNA glycosylase (UDG) superfamily. UNG family.

The protein resides in the cytoplasm. The enzyme catalyses Hydrolyzes single-stranded DNA or mismatched double-stranded DNA and polynucleotides, releasing free uracil.. Functionally, excises uracil residues from the DNA which can arise as a result of misincorporation of dUMP residues by DNA polymerase or due to deamination of cytosine. The chain is Uracil-DNA glycosylase from Vibrio vulnificus (strain CMCP6).